We begin with the raw amino-acid sequence, 821 residues long: DNA replication licensing factor MCM6 (821 aa).

M1 is modified (N-acetylmethionine). Phosphoserine is present on residues S13, S219, and S271. Phosphothreonine is present on T278. The MCM domain occupies 346–553 (LYHNLCTSLF…TDYAIARRIV (208 aa)). ATP-binding residues include H359, S399, T400, A401, K402, S403, and N504. The short motif at 528–531 (SRFD) is the Arginine finger element. 2 residues coordinate ADP: R619 and E622. N6-acetyllysine is present on K643. The tract at residues 676–706 (VDEGPDGINGHADSPAPASGINGHSEDMNQD) is disordered. S689 and S762 each carry phosphoserine. T791 is subject to Phosphothreonine.

This sequence belongs to the MCM family. As to quaternary structure, component of the MCM2-7 complex. The complex forms a toroidal hexameric ring with the proposed subunit order MCM2-MCM6-MCM4-MCM7-MCM3-MCM5. Component of the CMG helicase complex, a hexameric ring of related MCM2-7 subunits stabilized by CDC45 and the tetrameric GINS complex. May interact with MCM10. Interacts with TIPIN. Interacts with CDT1. Interacts with MCMBP. Interacts with DDI2. O-glycosylated (O-GlcNAcylated), in a cell cycle-dependent manner.

Its subcellular location is the nucleus. It localises to the chromosome. It carries out the reaction ATP + H2O = ADP + phosphate + H(+). Its function is as follows. Acts as a component of the MCM2-7 complex (MCM complex) which is the replicative helicase essential for 'once per cell cycle' DNA replication initiation and elongation in eukaryotic cells. Core component of CDC45-MCM-GINS (CMG) helicase, the molecular machine that unwinds template DNA during replication, and around which the replisome is built. The active ATPase sites in the MCM2-7 ring are formed through the interaction surfaces of two neighboring subunits such that a critical structure of a conserved arginine finger motif is provided in trans relative to the ATP-binding site of the Walker A box of the adjacent subunit. The six ATPase active sites, however, are likely to contribute differentially to the complex helicase activity. This is DNA replication licensing factor MCM6 (MCM6) from Bos taurus (Bovine).